A 101-amino-acid chain; its full sequence is Movement protein (101 aa).

Residues 30–50 (EVAVLSFVALICIYLLYLWVL) traverse the membrane as a helical segment. Residues 78 to 101 (RSPIPNTLEPTAPVHPGPFVPGSG) are disordered. The span at 90-101 (PVHPGPFVPGSG) shows a compositional bias: pro residues.

It belongs to the mastrevirus movement protein family. In terms of assembly, interacts with the capsid protein (CP). Part of a MP-CP-viral DNA complex.

It is found in the host membrane. Involved in the viral transport within, and between cells. In Maize streak virus genotype E (isolate Pat) (MSV), this protein is Movement protein.